Reading from the N-terminus, the 159-residue chain is NADH-quinone oxidoreductase subunit B (159 aa).

Positions 37, 38, 102, and 132 each coordinate [4Fe-4S] cluster.

This sequence belongs to the complex I 20 kDa subunit family. In terms of assembly, NDH-1 is composed of 14 different subunits. Subunits NuoB, C, D, E, F, and G constitute the peripheral sector of the complex. The cofactor is [4Fe-4S] cluster.

The protein resides in the cell inner membrane. It carries out the reaction a quinone + NADH + 5 H(+)(in) = a quinol + NAD(+) + 4 H(+)(out). NDH-1 shuttles electrons from NADH, via FMN and iron-sulfur (Fe-S) centers, to quinones in the respiratory chain. Couples the redox reaction to proton translocation (for every two electrons transferred, four hydrogen ions are translocated across the cytoplasmic membrane), and thus conserves the redox energy in a proton gradient. This is NADH-quinone oxidoreductase subunit B from Vesicomyosocius okutanii subsp. Calyptogena okutanii (strain HA).